Consider the following 519-residue polypeptide: Putative ATP-dependent RNA helicase L396 (519 aa).

In terms of domain architecture, Helicase ATP-binding spans 110–258 (IKGMEEGGGG…IINWYMGPIL (149 aa)). 123–130 (MGCGSGKT) is a binding site for ATP. Residues 211–214 (DEVH) carry the DEAH box motif. The Helicase C-terminal domain maps to 317 to 457 (YLIQELFDMG…KQKYNIQKYY (141 aa)).

This sequence belongs to the DEAD box helicase family. DEAH subfamily.

It catalyses the reaction ATP + H2O = ADP + phosphate + H(+). The protein is Putative ATP-dependent RNA helicase L396 of Acanthamoeba polyphaga (Amoeba).